The following is a 708-amino-acid chain: Lactotransferrin (708 aa).

The signal sequence occupies residues 1 to 19 (MKLLFLALLSLLALGPSLA). Transferrin-like domains lie at 25–352 (VRWC…NLKE) and 364–693 (VVWC…NLRQ). 2 disulfide bridges follow: cysteine 28–cysteine 64 and cysteine 38–cysteine 55. Aspartate 79 is a binding site for Fe(3+). Arginine 92 is a catalytic residue. Position 111 (tyrosine 111) interacts with Fe(3+). Cystine bridges form between cysteine 134-cysteine 217, cysteine 176-cysteine 192, cysteine 179-cysteine 202, cysteine 189-cysteine 200, and cysteine 250-cysteine 264. Residue threonine 136 coordinates hydrogencarbonate. Asparagine 139 carries N-linked (GlcNAc...) asparagine glycosylation. 3 residues coordinate hydrogencarbonate: arginine 140, alanine 142, and glycine 143. Tyrosine 211 is a Fe(3+) binding site. Histidine 272 provides a ligand contact to Fe(3+). Serine 278 serves as the catalytic Nucleophile. Disulfide bonds link cysteine 367–cysteine 399 and cysteine 377–cysteine 390. An N-linked (GlcNAc...) asparagine glycan is attached at asparagine 385. Fe(3+)-binding residues include aspartate 414 and aspartate 452. 4 disulfides stabilise this stretch: cysteine 476-cysteine 551, cysteine 510-cysteine 524, cysteine 521-cysteine 534, and cysteine 592-cysteine 606. Hydrogencarbonate is bound by residues threonine 478, arginine 482, alanine 484, and glycine 485. Asparagine 495 carries an N-linked (GlcNAc...) asparagine glycan. Residue tyrosine 545 participates in Fe(3+) binding. Residue histidine 614 participates in Fe(3+) binding.

The protein belongs to the transferrin family. Monomer. Found in a complex with LTF, CLU, EPPIN and SEMG1. Interacts with prey activated coagulation factor X; the interaction inhibits coagulation factor X catalytic activity. Found in a complex with MPO and LTF; interacts directly with CP, allows Fe(3+) incorporation into LTF and activation of CP ferroxidase activity. Post-translationally, N-glycosylated. Glycosylation is important for draculin anticoagulant activity. Probably also O-glycosylated. As to expression, expressed in the submaxillary gland and secreted in the saliva (at protein level).

Its subcellular location is the secreted. Functionally, transferrins are iron binding transport proteins which can bind two Fe(3+) ions in association with the binding of an anion, usually bicarbonate. In terms of biological role, major iron-binding and multifunctional protein found in exocrine fluids such as breast milk and mucosal secretions. Has antimicrobial activity. Antimicrobial properties may include bacteriostasis, which is related to its ability to sequester free iron and thus inhibit microbial growth, as well as direct bactericidal properties leading to the release of lipopolysaccharides from the bacterial outer membrane. May have anabolic, differentiating and anti-apoptotic effects on osteoblasts and may also inhibit osteoclastogenesis, possibly playing a role in the regulation of bone growth. May interfere with the lipopolysaccharide (LPS)-stimulated TLR4 signaling. The lactotransferrin transferrin-like domain 1 functions as a serine protease of the peptidase S60 family that cuts arginine rich regions. This function contributes to the antimicrobial activity. Shows a preferential cleavage at -Arg-Ser-Arg-Arg-|- and -Arg-Arg-Ser-Arg-|-, and of Z-Phe-Arg-|-aminomethylcoumarin sites. Its function is as follows. Acts as an anticoagulant of the blood coagulation cascade of the bat's prey by inhibiting coagulation factor IX and activated coagulation factor X. The protein is Lactotransferrin of Desmodus rotundus (Vampire bat).